Consider the following 271-residue polypeptide: p-hydroxybenzoate hydroxylase transcriptional activator (271 aa).

The region spanning 23-83 (IAGLAKGLAL…TDEHYFWLTH (61 aa)) is the HTH iclR-type domain. Positions 45–64 (VTQVAERTGISRTAARRYLK) form a DNA-binding region, H-T-H motif. Residues 98-271 (LPKVAQSFLN…NTANELRNLV (174 aa)) enclose the IclR-ED domain.

Positive regulator of the pobA gene for p-hydroxybenzoate hydroxylase. The sequence is that of p-hydroxybenzoate hydroxylase transcriptional activator (pobR) from Acinetobacter baylyi (strain ATCC 33305 / BD413 / ADP1).